Reading from the N-terminus, the 286-residue chain is Translocon-associated protein subunit alpha (286 aa).

Residues 1 to 23 form the signal peptide; sequence MRVLPRLLLLLLLAFPAAVLLRG. The Lumenal segment spans residues 24-207; the sequence is GPGGSLVAAQ…EREDGLDGET (184 aa). Over residues 37-75 the composition is skewed to acidic residues; it reads EDEETVEDSIIEDEDDEAEVEEDEPTDLAEDKEEEDVSG. The disordered stretch occupies residues 37 to 83; the sequence is EDEETVEDSIIEDEDDEAEVEEDEPTDLAEDKEEEDVSGEPEASPSA. N-linked (GlcNAc...) asparagine glycans are attached at residues N136 and N191. The helical transmembrane segment at 208–228 threads the bilayer; it reads IFMYMFLAGLGLLVVVGLHQL. The Cytoplasmic segment spans residues 229–286; sequence LESRKRKRPIQKVEMGTSSQNDVDMSWIPQETLNQINKASPRRLPRKRAQKRSVGSDE. S247 bears the Phosphoserine mark. A Phosphothreonine modification is found at T260. Residues 261–286 form a disordered region; it reads LNQINKASPRRLPRKRAQKRSVGSDE. S268 carries the phosphoserine modification. Positions 268–279 are enriched in basic residues; sequence SPRRLPRKRAQK.

Belongs to the TRAP-alpha family. In terms of assembly, heterotetramer of TRAP-alpha, TRAP-beta, TRAP-delta and TRAP-gamma. Interacts with palmitoylated calnexin (CALX), the interaction is required for efficient folding of glycosylated proteins. Post-translationally, phosphorylated in its cytoplasmic tail.

Its subcellular location is the endoplasmic reticulum membrane. In terms of biological role, TRAP proteins are part of a complex whose function is to bind calcium to the ER membrane and thereby regulate the retention of ER resident proteins. May be involved in the recycling of the translocation apparatus after completion of the translocation process or may function as a membrane-bound chaperone facilitating folding of translocated proteins. This Canis lupus familiaris (Dog) protein is Translocon-associated protein subunit alpha (SSR1).